A 168-amino-acid polypeptide reads, in one-letter code: Small ribosomal subunit protein uS5 (168 aa).

One can recognise an S5 DRBM domain in the interval 14–77; sequence FEERVVSINR…EAAKKNLITV (64 aa).

It belongs to the universal ribosomal protein uS5 family. In terms of assembly, part of the 30S ribosomal subunit. Contacts proteins S4 and S8.

With S4 and S12 plays an important role in translational accuracy. In terms of biological role, located at the back of the 30S subunit body where it stabilizes the conformation of the head with respect to the body. The polypeptide is Small ribosomal subunit protein uS5 (Lactococcus lactis subsp. cremoris (strain MG1363)).